Reading from the N-terminus, the 139-residue chain is Flagellar assembly factor FliW 2 (139 aa).

Belongs to the FliW family. In terms of assembly, interacts with translational regulator CsrA and flagellin(s).

Its subcellular location is the cytoplasm. Functionally, acts as an anti-CsrA protein, binds CsrA and prevents it from repressing translation of its target genes, one of which is flagellin. Binds to flagellin and participates in the assembly of the flagellum. This Helicobacter hepaticus (strain ATCC 51449 / 3B1) protein is Flagellar assembly factor FliW 2.